A 689-amino-acid polypeptide reads, in one-letter code: MANKEYPLAKFRNIGIMAHIDAGKTTATERILFYTGKTHKIGETHEGAATMDWMEQEQERGITITSAATTCFWKDHQVNIIDTPGHVDFTVEVERSLRVLDGAVTILDAKSGVEPQTETVWRQADNYKVPRMVFINKMDKLGADFLMSVGTLRERLHANAVPLQLPIGAEDSFSGIIDLVKNDAVIYKDDLGTVMDETEIPEDMKEIAEEYRTMLLEAVAEVDEDIMMKYLEGEEISVEEIKTALRKGVLANKIVPVLCGSAYKNKGVQLLLDAIIEFMPSPLDIEDVKGTEPTTGEEMTRPADAKAPLAALAFKIATDPFIGKLAFTRIYSGTMKSGTYVFNSNKGKRERIGRLVKMHANHREDVEELKAGELGAIVGLKDTTTGDTLCDDADPIILENMEFPEPVIDVSIEPKTKAGQEKMGIALAKLAEEDPTFRTYTNQETGQTIIAGMGELHLEIIVDRLIREFKVECNVGQPQVAYKETIKKHVKAEGKFIRQSGGRGQYGHCWIEMMPTEGEYEFQNAVVGGSIPKEYIPAIDNGIQEASQSGIIAGYPVINFKVKLFDGSYHDVDSSEMAFKIAGSMAFKNAMSKADAVLLEPSMKVEVVVPEEYMGDVIGDINSRRGRIEGMTPRAGAEVIRAFVPLSEMFGYATTLRSKTQGRGNYVMQFDHYEEVPKSIQDKVIGERK.

One can recognise a tr-type G domain in the interval 9-283; the sequence is AKFRNIGIMA…AIIEFMPSPL (275 aa). GTP is bound by residues 18–25, 82–86, and 136–139; these read AHIDAGKT, DTPGH, and NKMD.

The protein belongs to the TRAFAC class translation factor GTPase superfamily. Classic translation factor GTPase family. EF-G/EF-2 subfamily.

Its subcellular location is the cytoplasm. Catalyzes the GTP-dependent ribosomal translocation step during translation elongation. During this step, the ribosome changes from the pre-translocational (PRE) to the post-translocational (POST) state as the newly formed A-site-bound peptidyl-tRNA and P-site-bound deacylated tRNA move to the P and E sites, respectively. Catalyzes the coordinated movement of the two tRNA molecules, the mRNA and conformational changes in the ribosome. In Clostridium botulinum (strain ATCC 19397 / Type A), this protein is Elongation factor G.